The following is a 178-amino-acid chain: FMN reductase (NADH) RutF (178 aa).

Belongs to the non-flavoprotein flavin reductase family. RutF subfamily.

The enzyme catalyses FMNH2 + NAD(+) = FMN + NADH + 2 H(+). In terms of biological role, catalyzes the reduction of FMN to FMNH2 which is used to reduce pyrimidine by RutA via the Rut pathway. This Pseudomonas syringae pv. syringae (strain B728a) protein is FMN reductase (NADH) RutF.